A 379-amino-acid chain; its full sequence is MTAEHFPVTELAKDLISRPSVTPLDEGCQTLMAERLSAIGFNIEPMIFEDTTNMWARRGNQGPVFCFAGHTDVVPTGDISRWHTPPFEPTIIDGYLYGRGAADMKGSLAAMIVATERFVTKHPDHQGSIAFLITSDEEGPFINGTTRVIDTLEARKEKITWALVGEPSSTLKLGDVVKNGRRGSLTGNLTIKGIQGHVAYPHLADNPIHKAAPFLAELSQMHWDNGNEFFPPTSMQIANIHGGTGASNVIPGALEVMFNFRYSTEVTAEILIERVEALLKAHELDYDISWIFNGLPFLTGDGPLLDATRYAIHQVTGYDTSPQTTGGTSDGRFIAPTGAKVLELGPVNATIHKVNECVKVDDLEQLALCYEVILEQLLC.

Histidine 70 is a Zn(2+) binding site. Aspartate 72 is an active-site residue. Residue aspartate 103 coordinates Zn(2+). Glutamate 137 (proton acceptor) is an active-site residue. Residues glutamate 138, glutamate 166, and histidine 352 each contribute to the Zn(2+) site.

This sequence belongs to the peptidase M20A family. DapE subfamily. Homodimer. Zn(2+) is required as a cofactor. The cofactor is Co(2+).

It catalyses the reaction N-succinyl-(2S,6S)-2,6-diaminopimelate + H2O = (2S,6S)-2,6-diaminopimelate + succinate. Its pathway is amino-acid biosynthesis; L-lysine biosynthesis via DAP pathway; LL-2,6-diaminopimelate from (S)-tetrahydrodipicolinate (succinylase route): step 3/3. Its function is as follows. Catalyzes the hydrolysis of N-succinyl-L,L-diaminopimelic acid (SDAP), forming succinate and LL-2,6-diaminopimelate (DAP), an intermediate involved in the bacterial biosynthesis of lysine and meso-diaminopimelic acid, an essential component of bacterial cell walls. The chain is Succinyl-diaminopimelate desuccinylase from Shewanella sp. (strain W3-18-1).